The following is a 274-amino-acid chain: MEFLKMHGLGNDFVVVDEIKNQNLVNKNLSDLAKKICDRRFGIGADGLVLLLPSEKADFKMRIINSDGSEAEMCGNAIRCVARYYVEKYNPAKKQLEVETLAGIIKPEVLENNMVRVDMGRPILKPQEIPVAVEEEPVNIPLEVLGQKFYFTAVSMGNPHAVIFVDSLAKIELEKYGPLIETHPLFPRKTNVEFVEILSPAKVKVFVWERGAGATLACGTGASAVVVAGRILGHLQEDVEVVLPGGSLFINWVFGESVYMTGPAEIVFKGEYFL.

Substrate contacts are provided by N11 and N65. C74 (proton donor) is an active-site residue. Residues 75 to 76, N158, N191, and 209 to 210 each bind substrate; these read GN and ER. C218 acts as the Proton acceptor in catalysis. 219-220 lines the substrate pocket; it reads GT.

This sequence belongs to the diaminopimelate epimerase family. As to quaternary structure, homodimer.

It is found in the cytoplasm. It carries out the reaction (2S,6S)-2,6-diaminopimelate = meso-2,6-diaminopimelate. The protein operates within amino-acid biosynthesis; L-lysine biosynthesis via DAP pathway; DL-2,6-diaminopimelate from LL-2,6-diaminopimelate: step 1/1. In terms of biological role, catalyzes the stereoinversion of LL-2,6-diaminopimelate (L,L-DAP) to meso-diaminopimelate (meso-DAP), a precursor of L-lysine and an essential component of the bacterial peptidoglycan. The polypeptide is Diaminopimelate epimerase (Carboxydothermus hydrogenoformans (strain ATCC BAA-161 / DSM 6008 / Z-2901)).